We begin with the raw amino-acid sequence, 660 residues long: Threonine--tRNA ligase (660 aa).

One can recognise a TGS domain in the interval 1–49 (MPINEIRVQKGQRYRDAINDKKVIAVKKGDKFLDLDEIAGEDEAVQPVY). Residues 225–554 (DHRKIIAEMD…LLEHFAGKLP (330 aa)) are catalytic. Positions 318, 369, and 531 each coordinate Zn(2+).

Belongs to the class-II aminoacyl-tRNA synthetase family. As to quaternary structure, homodimer. Zn(2+) serves as cofactor.

Its subcellular location is the cytoplasm. It catalyses the reaction tRNA(Thr) + L-threonine + ATP = L-threonyl-tRNA(Thr) + AMP + diphosphate + H(+). Its function is as follows. Catalyzes the attachment of threonine to tRNA(Thr) in a two-step reaction: L-threonine is first activated by ATP to form Thr-AMP and then transferred to the acceptor end of tRNA(Thr). The protein is Threonine--tRNA ligase of Thermoplasma volcanium (strain ATCC 51530 / DSM 4299 / JCM 9571 / NBRC 15438 / GSS1).